Reading from the N-terminus, the 650-residue chain is MPRDALSFELQLSAGLEATEHKLDMLTRLLRRTHVAVKHPLLASRAFHTSPALRAIDMAKVDTTERLAELRKLMKERKVDVYTYISGFTGSAGYAVVTHDKAALATDGRYFNQAEKQLDSNWELLKQGIQDVPTIQEWTADQVEGGKVVGVDPSVVTGADARKLAEKIKKKGGEYKAVDDNLVDLVWAAERPARPSEKVIVQPMEYSGKSFDEKVEDLRKELEKKKSLGFVVSMLDEVAWLFNLRGNDIPYNPVFFSYAVITPTVVTLYVDESKLPKEVKDHLGDKVAIRPYEAIFGDITALSKDAFEAADADATKKFLTSNRASWALNKALGGDDKVEEIRSPIGDAKAVKNEVELEGMRQCHIRDGAAISEYFAWLEDQLLNKKATLDEVDGADKLEAIRKKHDKFMGLSFDTISSTGPNGAVIHYKPEKGACSIIDPNAIYLCDSGAQYHDGTTDTTRTLHFTKPTDMEKKAYTLVLKGNIALERVKFPKGTTGFALDSIARQFLWAEGLDYRHGTGHGVGSFLNVHEGPIGIGTRVQYSEVSLAVGNVISDEPGYYEDGKFGIRIENMIMVKEVETNHKFGDKPYLGFEHVTLTPHCRNLVDMTLLTEDEKKFINDYHKEVFEKTSKFFENDKLTMDWLKRETAPY.

Positions 447, 458, 556, and 570 each coordinate Mn(2+).

This sequence belongs to the peptidase M24B family. Mn(2+) is required as a cofactor.

The catalysed reaction is Release of any N-terminal amino acid, including proline, that is linked to proline, even from a dipeptide or tripeptide.. In terms of biological role, catalyzes the removal of a penultimate prolyl residue from the N-termini of peptides. This is Probable Xaa-Pro aminopeptidase P (AMPP) from Phaeosphaeria nodorum (strain SN15 / ATCC MYA-4574 / FGSC 10173) (Glume blotch fungus).